The primary structure comprises 244 residues: 1-(5-phosphoribosyl)-5-[(5-phosphoribosylamino)methylideneamino] imidazole-4-carboxamide isomerase (244 aa).

Asp-8 acts as the Proton acceptor in catalysis. Asp-129 serves as the catalytic Proton donor.

The protein belongs to the HisA/HisF family.

The protein localises to the cytoplasm. The enzyme catalyses 1-(5-phospho-beta-D-ribosyl)-5-[(5-phospho-beta-D-ribosylamino)methylideneamino]imidazole-4-carboxamide = 5-[(5-phospho-1-deoxy-D-ribulos-1-ylimino)methylamino]-1-(5-phospho-beta-D-ribosyl)imidazole-4-carboxamide. It functions in the pathway amino-acid biosynthesis; L-histidine biosynthesis; L-histidine from 5-phospho-alpha-D-ribose 1-diphosphate: step 4/9. The chain is 1-(5-phosphoribosyl)-5-[(5-phosphoribosylamino)methylideneamino] imidazole-4-carboxamide isomerase from Maricaulis maris (strain MCS10) (Caulobacter maris).